The primary structure comprises 426 residues: Histidinol dehydrogenase (426 aa).

Tyr-123, Gln-185, and Asn-208 together coordinate NAD(+). Positions 231, 253, and 256 each coordinate substrate. Gln-253 and His-256 together coordinate Zn(2+). Catalysis depends on proton acceptor residues Glu-321 and His-322. Residues His-322, Asp-355, Glu-409, and His-414 each coordinate substrate. Asp-355 is a binding site for Zn(2+). Position 414 (His-414) interacts with Zn(2+).

It belongs to the histidinol dehydrogenase family. Zn(2+) is required as a cofactor.

The catalysed reaction is L-histidinol + 2 NAD(+) + H2O = L-histidine + 2 NADH + 3 H(+). It participates in amino-acid biosynthesis; L-histidine biosynthesis; L-histidine from 5-phospho-alpha-D-ribose 1-diphosphate: step 9/9. Functionally, catalyzes the sequential NAD-dependent oxidations of L-histidinol to L-histidinaldehyde and then to L-histidine. In Bacillus licheniformis (strain ATCC 14580 / DSM 13 / JCM 2505 / CCUG 7422 / NBRC 12200 / NCIMB 9375 / NCTC 10341 / NRRL NRS-1264 / Gibson 46), this protein is Histidinol dehydrogenase.